The sequence spans 64 residues: Large ribosomal subunit protein bL33c (64 aa).

It belongs to the bacterial ribosomal protein bL33 family.

It is found in the plastid. The protein resides in the chloroplast. This Huperzia lucidula (Shining clubmoss) protein is Large ribosomal subunit protein bL33c.